Reading from the N-terminus, the 214-residue chain is Outer-membrane lipoprotein carrier protein (214 aa).

The signal sequence occupies residues 1 to 23; it reads MNKRITVLSLLLATSLSSAAAMA.

Belongs to the LolA family. As to quaternary structure, monomer.

It localises to the periplasm. Functionally, participates in the translocation of lipoproteins from the inner membrane to the outer membrane. Only forms a complex with a lipoprotein if the residue after the N-terminal Cys is not an aspartate (The Asp acts as a targeting signal to indicate that the lipoprotein should stay in the inner membrane). In Shewanella frigidimarina (strain NCIMB 400), this protein is Outer-membrane lipoprotein carrier protein.